Reading from the N-terminus, the 187-residue chain is Protein GrpE (187 aa).

The interval 1-31 (MEKKETKNDAEKNNKQDNKSTKSQKKENLNL) is disordered.

The protein belongs to the GrpE family. Homodimer.

The protein resides in the cytoplasm. Participates actively in the response to hyperosmotic and heat shock by preventing the aggregation of stress-denatured proteins, in association with DnaK and GrpE. It is the nucleotide exchange factor for DnaK and may function as a thermosensor. Unfolded proteins bind initially to DnaJ; upon interaction with the DnaJ-bound protein, DnaK hydrolyzes its bound ATP, resulting in the formation of a stable complex. GrpE releases ADP from DnaK; ATP binding to DnaK triggers the release of the substrate protein, thus completing the reaction cycle. Several rounds of ATP-dependent interactions between DnaJ, DnaK and GrpE are required for fully efficient folding. This Borrelia garinii subsp. bavariensis (strain ATCC BAA-2496 / DSM 23469 / PBi) (Borreliella bavariensis) protein is Protein GrpE.